The following is a 148-amino-acid chain: Cytochrome c-552 (148 aa).

The N-terminal stretch at 1–17 (MKRTLMAFLLLGGLALA) is a signal peptide. At Gln18 the chain carries Pyrrolidone carboxylic acid. 4 residues coordinate heme c: Cys28, Cys31, His32, and Met86.

Binds 1 heme c group covalently per subunit.

In terms of biological role, this monoheme basic protein appears to function as an electron donor to cytochrome oxidase in T.thermophilus. This Thermus thermophilus (strain ATCC 27634 / DSM 579 / HB8) protein is Cytochrome c-552 (cycA).